The chain runs to 268 residues: Tryptophan synthase alpha chain (268 aa).

Residues Glu-49 and Asp-60 each act as proton acceptor in the active site.

Belongs to the TrpA family. Tetramer of two alpha and two beta chains.

It catalyses the reaction (1S,2R)-1-C-(indol-3-yl)glycerol 3-phosphate + L-serine = D-glyceraldehyde 3-phosphate + L-tryptophan + H2O. Its pathway is amino-acid biosynthesis; L-tryptophan biosynthesis; L-tryptophan from chorismate: step 5/5. The alpha subunit is responsible for the aldol cleavage of indoleglycerol phosphate to indole and glyceraldehyde 3-phosphate. This Xanthomonas oryzae pv. oryzae (strain MAFF 311018) protein is Tryptophan synthase alpha chain.